Reading from the N-terminus, the 366-residue chain is Beta-1,3-glucan-binding protein (366 aa).

A signal peptide spans 1 to 17 (MKGFVASVVLLACGALA). The GH16 domain occupies 18-364 (ADIVEPEDCT…YVRVWKMEST (347 aa)). Asn66 carries N-linked (GlcNAc...) asparagine glycosylation.

This sequence belongs to the glycosyl hydrolase 16 family. Constitutively expressed in hemocytes.

The protein localises to the secreted. In terms of biological role, binds to beta-1,3-glucan. May play a role in recognition of microorganisms and in activation of the prophenoloxidase cascade. The chain is Beta-1,3-glucan-binding protein from Penaeus monodon (Giant tiger prawn).